Consider the following 64-residue polypeptide: Probable cytochrome c oxidase subunit 5C-1 (64 aa).

Residues 15–34 form a helical membrane-spanning segment; it reads SVVKELFIGLALGLAAGGLW.

The protein belongs to the cytochrome c oxidase subunit 5C family.

It localises to the mitochondrion inner membrane. Functionally, this protein is one of the nuclear-coded polypeptide chains of cytochrome c oxidase, the terminal oxidase in mitochondrial electron transport. This chain is Probable cytochrome c oxidase subunit 5C-1, found in Arabidopsis thaliana (Mouse-ear cress).